The primary structure comprises 381 residues: Selenoprotein P (381 aa).

The first 19 residues, Met1–Thr19, serve as a signal peptide directing secretion. Residue Asn46 is glycosylated (N-linked (GlcNAc...) asparagine). Position 59 (Sec59) is a non-standard amino acid, selenocysteine. A glycan (N-linked (GlcNAc...) (complex) asparagine) is linked at Asn83. N-linked (GlcNAc...) asparagine glycosylation is found at Asn119, Asn128, and Asn174. Positions Thr200–Asp268 are disordered. Residues His204–Gln216 show a composition bias toward basic residues. Over residues Leu218–Gly230 the composition is skewed to polar residues. The segment covering Leu243–Gln255 has biased composition (basic residues). Ser266 carries the post-translational modification Phosphoserine. Residues Sec300, Sec318, and Sec330 are each a non-standard amino acid (selenocysteine). The N-linked (GlcNAc...) asparagine glycan is linked to Asn338. 6 non-standard amino acids (selenocysteine) are found at residues Sec345, Sec352, Sec367, Sec369, Sec376, and Sec378. Residues Ser355–Asn381 form a disordered region.

This sequence belongs to the selenoprotein P family. In terms of processing, phosphorylation sites are present in the extracellular medium. In terms of tissue distribution, made in the liver and heart and secreted into the plasma. It is also found in the kidney.

It is found in the secreted. Might be responsible for some of the extracellular antioxidant defense properties of selenium or might be involved in the transport of selenium. May supply selenium to tissues such as brain and testis. This Homo sapiens (Human) protein is Selenoprotein P.